Consider the following 184-residue polypeptide: Phosphopantetheine adenylyltransferase (184 aa).

Ser8 is a substrate binding site. ATP contacts are provided by residues Ser8–Phe9 and His16. 3 residues coordinate substrate: Lys40, Leu74, and Arg88. ATP is bound by residues Gly89 to Arg91, Glu99, and Trp123 to Thr129.

The protein belongs to the bacterial CoaD family. Homohexamer. The cofactor is Mg(2+).

It is found in the cytoplasm. The enzyme catalyses (R)-4'-phosphopantetheine + ATP + H(+) = 3'-dephospho-CoA + diphosphate. It functions in the pathway cofactor biosynthesis; coenzyme A biosynthesis; CoA from (R)-pantothenate: step 4/5. Reversibly transfers an adenylyl group from ATP to 4'-phosphopantetheine, yielding dephospho-CoA (dPCoA) and pyrophosphate. This Deinococcus geothermalis (strain DSM 11300 / CIP 105573 / AG-3a) protein is Phosphopantetheine adenylyltransferase.